Reading from the N-terminus, the 316-residue chain is Olfactory receptor 2AG1 (316 aa).

The Extracellular segment spans residues 1–25 (MELWNFTLGSGFILVGILNDSGSPE). Residues Asn5 and Asn19 are each glycosylated (N-linked (GlcNAc...) asparagine). Residues 26–49 (LLCATITILYLLALISNGLLLLAI) traverse the membrane as a helical segment. Residues 50–57 (TMEARLHM) lie on the Cytoplasmic side of the membrane. The chain crosses the membrane as a helical span at residues 58-79 (PMYLLLGQLSLMDLLFTSVVTP). The Extracellular portion of the chain corresponds to 80–100 (KALADFLRRENTISFGGCALQ). An intrachain disulfide couples Cys97 to Cys189. Residues 101–120 (MFLALTMGGAEDLLLAFMAY) form a helical membrane-spanning segment. Topologically, residues 121–139 (DRYVAICHPLTYMTLMSSR) are cytoplasmic. A helical transmembrane segment spans residues 140–158 (ACWLMVATSWILASLSALI). The Extracellular portion of the chain corresponds to 159–195 (YTVYTMHYPFCRAQEIRHLLCEIPHLLKVACADTSRY). A helical transmembrane segment spans residues 196 to 219 (ELMVYVMGVTFLIPSLAAILASYT). The Cytoplasmic portion of the chain corresponds to 220–236 (QILLTVLHMPSNEGRKK). Residues 237-259 (ALVTCSSHLTVVGMFYGAATFMY) traverse the membrane as a helical segment. Residues 260 to 272 (VLPSSFHSTRQDN) are Extracellular-facing. Residues 273–292 (IISVFYTIVTPALNPLIYSL) traverse the membrane as a helical segment. At 293–316 (RNKEVMRALRRVLGKYMLPAHSTL) the chain is on the cytoplasmic side.

Belongs to the G-protein coupled receptor 1 family.

The protein localises to the cell membrane. Odorant receptor. This is Olfactory receptor 2AG1 (OR2AG1) from Homo sapiens (Human).